The chain runs to 365 residues: 3-dehydroquinate synthase (365 aa).

NAD(+) contacts are provided by residues 69 to 74, 103 to 107, 127 to 128, Lys140, and Lys149; these read DGEAHK, GVIGD, and TT. Glu182, His245, and His262 together coordinate Zn(2+).

The protein belongs to the sugar phosphate cyclases superfamily. Dehydroquinate synthase family. Co(2+) serves as cofactor. Zn(2+) is required as a cofactor. It depends on NAD(+) as a cofactor.

It localises to the cytoplasm. The enzyme catalyses 7-phospho-2-dehydro-3-deoxy-D-arabino-heptonate = 3-dehydroquinate + phosphate. It functions in the pathway metabolic intermediate biosynthesis; chorismate biosynthesis; chorismate from D-erythrose 4-phosphate and phosphoenolpyruvate: step 2/7. Functionally, catalyzes the conversion of 3-deoxy-D-arabino-heptulosonate 7-phosphate (DAHP) to dehydroquinate (DHQ). In Pseudomonas putida (strain ATCC 700007 / DSM 6899 / JCM 31910 / BCRC 17059 / LMG 24140 / F1), this protein is 3-dehydroquinate synthase.